The primary structure comprises 300 residues: Protein FANTASTIC FOUR 4 (300 aa).

Residues 30 to 56 (PQLSTPLKSHFQNSSIAPQDNPITINA) are compositionally biased toward polar residues. Disordered stretches follow at residues 30-104 (PQLS…SPSS), 142-170 (TMET…LPPP), and 227-264 (TETK…KEEE). Low complexity-rich tracts occupy residues 58–88 (SLPS…NSSS) and 142–151 (TMETRTTSTT). In terms of domain architecture, FAF spans 166-217 (SLPPPLTSMIGFDCIEVKSHRENGRLVMMATRPPPRNRCLQDRSNGCVRLAI). Positions 233-262 (KEEEEEETIETVRDNEEEIPEYKEEEEEKE) are enriched in acidic residues.

It belongs to the fantastic four family. In terms of tissue distribution, expressed in the shoot apex and young siliques. Detected in provascular and vascular tissue, but not in the vegetative meristem. In inflorescences, restricted to the base of the flower and to the vasculature of the stem and the pedicels, but absent from young flowers. Detected in the center of the inflorescence meristem.

In terms of biological role, regulates the size of the shoot meristem by modulating the CLV3-WUS feedback loop. Can repress WUS but is under negative control by CLV3. This chain is Protein FANTASTIC FOUR 4 (FAF4), found in Arabidopsis thaliana (Mouse-ear cress).